Consider the following 57-residue polypeptide: MAFDKKLLEIVACPVCKGKLEFNKEAQQLICKADKLAYPINDGIPVLLENKAEPLAE.

This sequence belongs to the UPF0434 family.

In Shewanella pealeana (strain ATCC 700345 / ANG-SQ1), this protein is UPF0434 protein Spea_1772.